The following is a 311-amino-acid chain: Meteorin-like protein (311 aa).

The first 45 residues, 1–45 (MRGVVWAARRRAGQQWPRSPGPGPGPPPPPPLLLLLLLLLGGASA), serve as a signal peptide directing secretion. An intrachain disulfide couples Cys52 to Cys75. Asn103 carries N-linked (GlcNAc...) asparagine glycosylation. 4 disulfides stabilise this stretch: Cys107-Cys143, Cys188-Cys260, Cys191-Cys284, and Cys201-Cys306.

It belongs to the meteorin family. Abundantly expressed in adipose tissue.

It is found in the secreted. Its function is as follows. Hormone induced following exercise or cold exposure that promotes energy expenditure. Induced either in the skeletal muscle after exercise or in adipose tissue following cold exposure and is present in the circulation. Able to stimulate energy expenditure associated with the browning of the white fat depots and improves glucose tolerance. Does not promote an increase in a thermogenic gene program via direct action on adipocytes, but acts by stimulating several immune cell subtypes to enter the adipose tissue and activate their prothermogenic actions. Stimulates an eosinophil-dependent increase in IL4 expression and promotes alternative activation of adipose tissue macrophages, which are required for the increased expression of the thermogenic and anti-inflammatory gene programs in fat. Required for some cold-induced thermogenic responses, suggesting a role in metabolic adaptations to cold temperatures. This is Meteorin-like protein (Metrnl) from Rattus norvegicus (Rat).